We begin with the raw amino-acid sequence, 369 residues long: Transposase for insertion sequence element IS1201 (369 aa).

It belongs to the transposase mutator family.

In terms of biological role, required for the transposition of the insertion element. The protein is Transposase for insertion sequence element IS1201 of Lactobacillus helveticus (Lactobacillus suntoryeus).